Here is a 398-residue protein sequence, read N- to C-terminus: Isopenicillin N epimerase (398 aa).

N6-(pyridoxal phosphate)lysine is present on K219. Residues 243–264 (PQVSWGYRPDGENPSDERNRFG) are disordered. The segment covering 251-264 (PDGENPSDERNRFG) has biased composition (basic and acidic residues).

It belongs to the class-V pyridoxal-phosphate-dependent aminotransferase family. Pyridoxal 5'-phosphate serves as cofactor.

The enzyme catalyses isopenicillin N = penicillin N. Its pathway is antibiotic biosynthesis; cephalosporin C biosynthesis. Catalyzes the reversible isomerization between isopenicillin N and penicillin N. The chain is Isopenicillin N epimerase (cefD) from Amycolatopsis lactamdurans (Nocardia lactamdurans).